The primary structure comprises 66 residues: Stress-associated endoplasmic reticulum protein 1 (66 aa).

The disordered stretch occupies residues 1–31; it reads MVAKQRIRMANEKHSKNITQRGNVAKTSRNA. The segment covering 17–30 has biased composition (polar residues); the sequence is NITQRGNVAKTSRN. Residues 39–59 traverse the membrane as a helical segment; that stretch reads GPWLLALFIFVVCGSAIFQII.

The protein belongs to the RAMP4 family. As to quaternary structure, interacts with SEC61B, SEC61A1 and the SEC61 complex. Interacts with CANX.

The protein resides in the membrane. It localises to the endoplasmic reticulum membrane. Its function is as follows. Interacts with target proteins during their translocation into the lumen of the endoplasmic reticulum. Protects unfolded target proteins against degradation during ER stress. May facilitate glycosylation of target proteins after termination of ER stress. May modulate the use of N-glycosylation sites on target proteins. This is Stress-associated endoplasmic reticulum protein 1 (SERP1) from Bos taurus (Bovine).